Reading from the N-terminus, the 592-residue chain is Medium-chain-fatty-acid--[acyl-carrier-protein] ligase JamA (592 aa).

Belongs to the ATP-dependent AMP-binding enzyme family.

The catalysed reaction is a medium-chain fatty acid + holo-[ACP] + ATP = a medium-chain fatty acyl-[ACP] + AMP + diphosphate. The enzyme catalyses a medium-chain fatty acid + ATP + H(+) = a medium-chain fatty acyl-AMP + diphosphate. It catalyses the reaction a medium-chain fatty acyl-AMP + holo-[ACP] = a medium-chain fatty acyl-[ACP] + AMP + H(+). Ligase involved in the biosynthesis of jamaicamides, which show sodium channel blocking activity and fish toxicity. Initiates jamaicamide biosynthesis by the activation of the starter unit, 5-hexenoic acid, followed by the loading of the activated 5-hexenoic acid onto the acyl carrier protein JamC. In vitro, can also use 5-hexynoic acid, heptanoic acid, butanoic acid, hexanoic acid and benzoic acid. The chain is Medium-chain-fatty-acid--[acyl-carrier-protein] ligase JamA from Moorena producens (strain JHB).